Reading from the N-terminus, the 205-residue chain is Holliday junction branch migration complex subunit RuvA (205 aa).

Residues 1–68 (MIGYLEGTLL…QPKPVLIGFN (68 aa)) are domain I. The interval 69-146 (TEEEKDFFHL…RFADAGHSSA (78 aa)) is domain II. A flexible linker region spans residues 147-151 (PDVPV). The tract at residues 152–205 (TGSLADQTVEVLVGQLGYKPNEARLMVAGALKRNPDVSTPEALFDEIFKHGQAQ) is domain III.

This sequence belongs to the RuvA family. Homotetramer. Forms an RuvA(8)-RuvB(12)-Holliday junction (HJ) complex. HJ DNA is sandwiched between 2 RuvA tetramers; dsDNA enters through RuvA and exits via RuvB. An RuvB hexamer assembles on each DNA strand where it exits the tetramer. Each RuvB hexamer is contacted by two RuvA subunits (via domain III) on 2 adjacent RuvB subunits; this complex drives branch migration. In the full resolvosome a probable DNA-RuvA(4)-RuvB(12)-RuvC(2) complex forms which resolves the HJ.

Its subcellular location is the cytoplasm. In terms of biological role, the RuvA-RuvB-RuvC complex processes Holliday junction (HJ) DNA during genetic recombination and DNA repair, while the RuvA-RuvB complex plays an important role in the rescue of blocked DNA replication forks via replication fork reversal (RFR). RuvA specifically binds to HJ cruciform DNA, conferring on it an open structure. The RuvB hexamer acts as an ATP-dependent pump, pulling dsDNA into and through the RuvAB complex. HJ branch migration allows RuvC to scan DNA until it finds its consensus sequence, where it cleaves and resolves the cruciform DNA. This Desulfosudis oleivorans (strain DSM 6200 / JCM 39069 / Hxd3) (Desulfococcus oleovorans) protein is Holliday junction branch migration complex subunit RuvA.